Reading from the N-terminus, the 275-residue chain is Methylglyoxal reductase DkgA (275 aa).

The active-site Proton donor is Tyr51. His107 contributes to the substrate binding site. Position 187 to 241 (187 to 241) interacts with NADP(+); the sequence is SPLAQGGKGVFDQKVIRDLADKYGKTPAQIVIRWHLDSGLVVIPKSVTPSRIAEN.

This sequence belongs to the aldo/keto reductase family. Monomer.

The protein resides in the cytoplasm. It catalyses the reaction hydroxyacetone + NADP(+) = methylglyoxal + NADPH + H(+). Its function is as follows. Aldo-keto reductase that significantly contributes to cellular methylglyoxal detoxification by catalyzing the NADPH-dependent conversion of methylglyoxal to acetol. The polypeptide is Methylglyoxal reductase DkgA (Escherichia coli O157:H7).